The primary structure comprises 260 residues: Chloride intracellular channel Clic (260 aa).

Residues 42–66 form a helical membrane-spanning segment; it reads FCQEYFMDLYLLAELKTISLKVTTV.

This sequence belongs to the chloride channel CLIC family. In terms of tissue distribution, expressed in cardiac tubes.

The protein localises to the mitochondrion. The protein resides in the membrane. Functionally, might insert into membranes and form chloride ion channels. Channel activity depends on the pH. May play a role in ethanol sensitivity. This is Chloride intracellular channel Clic from Drosophila melanogaster (Fruit fly).